The primary structure comprises 542 residues: Apolipoprotein N-acyltransferase (542 aa).

Transmembrane regions (helical) follow at residues 26–46 (ASVI…LSLV), 54–74 (IWCL…SWML), 89–109 (LLIS…VLCF), 113–133 (YWGA…VRYY), 163–183 (WAGQ…VLVF), and 187–207 (FSYG…GTYY). One can recognise a CN hydrolase domain in the interval 220–499 (LRVAIVQPGY…PDVLQVSVPV (280 aa)). Catalysis depends on E264, which acts as the Proton acceptor. K349 is a catalytic residue. C404 acts as the Nucleophile in catalysis. A helical transmembrane segment spans residues 509-529 (FGDAPLLFVAVSSVLGVVGYF).

This sequence belongs to the CN hydrolase family. Apolipoprotein N-acyltransferase subfamily.

The protein resides in the cell inner membrane. It catalyses the reaction N-terminal S-1,2-diacyl-sn-glyceryl-L-cysteinyl-[lipoprotein] + a glycerophospholipid = N-acyl-S-1,2-diacyl-sn-glyceryl-L-cysteinyl-[lipoprotein] + a 2-acyl-sn-glycero-3-phospholipid + H(+). It participates in protein modification; lipoprotein biosynthesis (N-acyl transfer). Its function is as follows. Catalyzes the phospholipid dependent N-acylation of the N-terminal cysteine of apolipoprotein, the last step in lipoprotein maturation. The protein is Apolipoprotein N-acyltransferase of Chlamydia muridarum (strain MoPn / Nigg).